A 499-amino-acid polypeptide reads, in one-letter code: Lysosomal Pro-X carboxypeptidase (499 aa).

Residues 1-21 (MGRCSLLLLLLLIAFLTPGAA) form the signal peptide. Residues 22-47 (NPVSPSLRAPSSLPWSTSFRSRPTIT) constitute a propeptide that is removed on maturation. N-linked (GlcNAc...) asparagine glycosylation is present at N103. S181 (charge relay system) is an active-site residue. An SKS domain region spans residues 196 to 337 (HLVVGALASS…QNIFQALNVY (142 aa)). Cystine bridges form between C217-C375, C235-C313, C266-C346, and C367-C397. N-linked (GlcNAc...) asparagine glycosylation is present at N234. N-linked (GlcNAc...) asparagine glycosylation is found at N339 and N348. An N-linked (GlcNAc...) asparagine glycan is attached at N418. Catalysis depends on charge relay system residues D433 and H458.

It belongs to the peptidase S28 family. In terms of assembly, homodimer.

Its subcellular location is the lysosome. It catalyses the reaction Cleavage of a -Pro-|-Xaa bond to release a C-terminal amino acid.. Functionally, cleaves C-terminal amino acids linked to proline in peptides such as angiotensin II, III and des-Arg9-bradykinin. This cleavage occurs at acidic pH, but enzymatic activity is retained with some substrates at neutral pH. The polypeptide is Lysosomal Pro-X carboxypeptidase (PRCP) (Bos taurus (Bovine)).